A 227-amino-acid polypeptide reads, in one-letter code: Cytochrome c oxidase subunit 2 (227 aa).

Residues 1–14 are Mitochondrial intermembrane-facing; sequence MAYTFQLGLQDATS. A helical membrane pass occupies residues 15-45; sequence PIMEELTNFHDHTLMIVFLISSLVLYVISLM. At 46–59 the chain is on the mitochondrial matrix side; sequence LTTKLTHTNTMDAQ. The helical transmembrane segment at 60–87 threads the bilayer; sequence EVETIWTILPAVILILIALPSLRILYMM. Topologically, residues 88–227 are mitochondrial intermembrane; that stretch reads DEINNPVLTV…HFENWSASMI (140 aa). Residues H161, C196, E198, C200, H204, and M207 each coordinate Cu cation. E198 contacts Mg(2+).

The protein belongs to the cytochrome c oxidase subunit 2 family. Component of the cytochrome c oxidase (complex IV, CIV), a multisubunit enzyme composed of 14 subunits. The complex is composed of a catalytic core of 3 subunits MT-CO1, MT-CO2 and MT-CO3, encoded in the mitochondrial DNA, and 11 supernumerary subunits COX4I, COX5A, COX5B, COX6A, COX6B, COX6C, COX7A, COX7B, COX7C, COX8 and NDUFA4, which are encoded in the nuclear genome. The complex exists as a monomer or a dimer and forms supercomplexes (SCs) in the inner mitochondrial membrane with NADH-ubiquinone oxidoreductase (complex I, CI) and ubiquinol-cytochrome c oxidoreductase (cytochrome b-c1 complex, complex III, CIII), resulting in different assemblies (supercomplex SCI(1)III(2)IV(1) and megacomplex MCI(2)III(2)IV(2)). Found in a complex with TMEM177, COA6, COX18, COX20, SCO1 and SCO2. Interacts with TMEM177 in a COX20-dependent manner. Interacts with COX20. Interacts with COX16. It depends on Cu cation as a cofactor.

The protein localises to the mitochondrion inner membrane. The catalysed reaction is 4 Fe(II)-[cytochrome c] + O2 + 8 H(+)(in) = 4 Fe(III)-[cytochrome c] + 2 H2O + 4 H(+)(out). Functionally, component of the cytochrome c oxidase, the last enzyme in the mitochondrial electron transport chain which drives oxidative phosphorylation. The respiratory chain contains 3 multisubunit complexes succinate dehydrogenase (complex II, CII), ubiquinol-cytochrome c oxidoreductase (cytochrome b-c1 complex, complex III, CIII) and cytochrome c oxidase (complex IV, CIV), that cooperate to transfer electrons derived from NADH and succinate to molecular oxygen, creating an electrochemical gradient over the inner membrane that drives transmembrane transport and the ATP synthase. Cytochrome c oxidase is the component of the respiratory chain that catalyzes the reduction of oxygen to water. Electrons originating from reduced cytochrome c in the intermembrane space (IMS) are transferred via the dinuclear copper A center (CU(A)) of subunit 2 and heme A of subunit 1 to the active site in subunit 1, a binuclear center (BNC) formed by heme A3 and copper B (CU(B)). The BNC reduces molecular oxygen to 2 water molecules using 4 electrons from cytochrome c in the IMS and 4 protons from the mitochondrial matrix. The sequence is that of Cytochrome c oxidase subunit 2 (MT-CO2) from Niviventer culturatus (Oldfield white-bellied rat).